The following is a 274-amino-acid chain: 3-methyl-2-oxobutanoate hydroxymethyltransferase (274 aa).

Residues D49 and D88 each coordinate Mg(2+). Residues 49 to 50, D88, and K118 contribute to the 3-methyl-2-oxobutanoate site; that span reads DS. E120 serves as a coordination point for Mg(2+). The active-site Proton acceptor is E187.

It belongs to the PanB family. In terms of assembly, homodecamer; pentamer of dimers. It depends on Mg(2+) as a cofactor.

The protein localises to the cytoplasm. It catalyses the reaction 3-methyl-2-oxobutanoate + (6R)-5,10-methylene-5,6,7,8-tetrahydrofolate + H2O = 2-dehydropantoate + (6S)-5,6,7,8-tetrahydrofolate. It functions in the pathway cofactor biosynthesis; (R)-pantothenate biosynthesis; (R)-pantoate from 3-methyl-2-oxobutanoate: step 1/2. Catalyzes the reversible reaction in which hydroxymethyl group from 5,10-methylenetetrahydrofolate is transferred onto alpha-ketoisovalerate to form ketopantoate. The polypeptide is 3-methyl-2-oxobutanoate hydroxymethyltransferase (Rhodopseudomonas palustris (strain ATCC BAA-98 / CGA009)).